We begin with the raw amino-acid sequence, 819 residues long: Kinesin-like protein KIN-13A (819 aa).

The segment at 150-178 (EPFEPSPFIPKEMDEDDDDMLPGSQPGPS) is disordered. The Kinesin motor domain occupies 199-535 (KIKVVVRKRP…LRYADRVKSL (337 aa)). 289 to 296 (GQTGSGKT) lines the ATP pocket. Positions 534–729 (SLSKGSNTRK…QSEKESSCDD (196 aa)) are disordered. The span at 550 to 562 (TIPSSKDSSSAPS) shows a compositional bias: low complexity. Basic and acidic residues-rich tracts occupy residues 577 to 589 (QEKR…RKAA) and 614 to 631 (RGKE…ERVD). Residues 632–652 (LNSSRISYNSKPQSVQSSANL) are compositionally biased toward polar residues. Residues 669–686 (YRDDKPERQSNYAKKDSG) show a composition bias toward basic and acidic residues. Over residues 697–719 (QQAKQLQQQQRPTSASASQNSSR) the composition is skewed to low complexity. Residues 736 to 767 (LEEEEALIAAHRKEIENTMEIVREEMNLLAEV) are a coiled coil.

Belongs to the TRAFAC class myosin-kinesin ATPase superfamily. Kinesin family. KIN-13 subfamily. Ubiquitous.

The protein localises to the microsome. This chain is Kinesin-like protein KIN-13A, found in Oryza sativa subsp. japonica (Rice).